The chain runs to 130 residues: Small ribosomal subunit protein uS11 (130 aa).

This sequence belongs to the universal ribosomal protein uS11 family. Part of the 30S ribosomal subunit. Interacts with proteins S7 and S18. Binds to IF-3.

In terms of biological role, located on the platform of the 30S subunit, it bridges several disparate RNA helices of the 16S rRNA. Forms part of the Shine-Dalgarno cleft in the 70S ribosome. The sequence is that of Small ribosomal subunit protein uS11 from Thermotoga maritima (strain ATCC 43589 / DSM 3109 / JCM 10099 / NBRC 100826 / MSB8).